We begin with the raw amino-acid sequence, 287 residues long: Ribosomal RNA small subunit methyltransferase A (287 aa).

Residues Asn28, Leu30, Gly55, Glu77, Asp103, and Asn123 each coordinate S-adenosyl-L-methionine.

The protein belongs to the class I-like SAM-binding methyltransferase superfamily. rRNA adenine N(6)-methyltransferase family. RsmA subfamily.

The protein localises to the cytoplasm. The enzyme catalyses adenosine(1518)/adenosine(1519) in 16S rRNA + 4 S-adenosyl-L-methionine = N(6)-dimethyladenosine(1518)/N(6)-dimethyladenosine(1519) in 16S rRNA + 4 S-adenosyl-L-homocysteine + 4 H(+). Functionally, specifically dimethylates two adjacent adenosines (A1518 and A1519) in the loop of a conserved hairpin near the 3'-end of 16S rRNA in the 30S particle. May play a critical role in biogenesis of 30S subunits. The protein is Ribosomal RNA small subunit methyltransferase A of Rhodopseudomonas palustris (strain TIE-1).